The primary structure comprises 182 residues: UPF0316 protein BCQ_3166 (182 aa).

Helical transmembrane passes span 6–26 (LIFVLQIIYVPILTIRTILLV), 32–52 (SAAAVGLLEGAIYIVSLGIVF), and 58–78 (WMNIVAYVIGFSAGLLLGGYI).

This sequence belongs to the UPF0316 family.

The protein resides in the cell membrane. The protein is UPF0316 protein BCQ_3166 of Bacillus cereus (strain Q1).